Consider the following 339-residue polypeptide: uncharacterized protein (339 aa).

2 VOC domains span residues 2–127 (EFDY…VRSE) and 141–276 (TIDH…CLEI). Positions 144, 222, and 306 each coordinate Fe cation.

It belongs to the 4HPPD family. Fe cation is required as a cofactor.

This is an uncharacterized protein from Synechocystis sp. (strain ATCC 27184 / PCC 6803 / Kazusa).